The following is a 322-amino-acid chain: Adenine deaminase (322 aa).

Residues His11, His13, and His189 each coordinate Zn(2+). The Proton donor role is filled by Glu192. Asp270 serves as a coordination point for Zn(2+). Residue Asp271 participates in substrate binding.

The protein belongs to the metallo-dependent hydrolases superfamily. Adenosine and AMP deaminases family. Adenine deaminase type 2 subfamily. Zn(2+) is required as a cofactor.

The catalysed reaction is adenine + H2O + H(+) = hypoxanthine + NH4(+). Catalyzes the hydrolytic deamination of adenine to hypoxanthine. Plays an important role in the purine salvage pathway and in nitrogen catabolism. The chain is Adenine deaminase from Rhizobium johnstonii (strain DSM 114642 / LMG 32736 / 3841) (Rhizobium leguminosarum bv. viciae).